Here is a 217-residue protein sequence, read N- to C-terminus: MSAPLTLALSKGRIFEETLPLLAAAGVQVAEDPETSRKLILPTTDPNLRVIIVRASDVPTYVEYGAADFGVAGKDVLVEHGGSGLYQPIDLNIARCRMSVAVPAGFDYANAVRQGARLRVATKYVETAREHFAAKGVHVDLIKLYGSMELAPLVGLADAIVDLVSSGGTLKANNLVEVEEIMSISSRLVVNQAALKLKRTALKPFLDAFERASQNGN.

This sequence belongs to the ATP phosphoribosyltransferase family. Short subfamily. In terms of assembly, heteromultimer composed of HisG and HisZ subunits.

It localises to the cytoplasm. The enzyme catalyses 1-(5-phospho-beta-D-ribosyl)-ATP + diphosphate = 5-phospho-alpha-D-ribose 1-diphosphate + ATP. Its pathway is amino-acid biosynthesis; L-histidine biosynthesis; L-histidine from 5-phospho-alpha-D-ribose 1-diphosphate: step 1/9. Functionally, catalyzes the condensation of ATP and 5-phosphoribose 1-diphosphate to form N'-(5'-phosphoribosyl)-ATP (PR-ATP). Has a crucial role in the pathway because the rate of histidine biosynthesis seems to be controlled primarily by regulation of HisG enzymatic activity. This Burkholderia vietnamiensis (strain G4 / LMG 22486) (Burkholderia cepacia (strain R1808)) protein is ATP phosphoribosyltransferase.